The sequence spans 546 residues: Glucose-6-phosphate isomerase (546 aa).

Glu352 (proton donor) is an active-site residue. Residues His383 and Lys511 contribute to the active site.

The protein belongs to the GPI family.

Its subcellular location is the cytoplasm. It catalyses the reaction alpha-D-glucose 6-phosphate = beta-D-fructose 6-phosphate. The protein operates within carbohydrate biosynthesis; gluconeogenesis. It functions in the pathway carbohydrate degradation; glycolysis; D-glyceraldehyde 3-phosphate and glycerone phosphate from D-glucose: step 2/4. Its function is as follows. Catalyzes the reversible isomerization of glucose-6-phosphate to fructose-6-phosphate. The sequence is that of Glucose-6-phosphate isomerase from Paramagnetospirillum magneticum (strain ATCC 700264 / AMB-1) (Magnetospirillum magneticum).